The chain runs to 230 residues: Large ribosomal subunit protein uL1 (230 aa).

It belongs to the universal ribosomal protein uL1 family. In terms of assembly, part of the 50S ribosomal subunit.

Functionally, binds directly to 23S rRNA. The L1 stalk is quite mobile in the ribosome, and is involved in E site tRNA release. In terms of biological role, protein L1 is also a translational repressor protein, it controls the translation of the L11 operon by binding to its mRNA. In Bradyrhizobium sp. (strain BTAi1 / ATCC BAA-1182), this protein is Large ribosomal subunit protein uL1.